The chain runs to 1043 residues: Ack-related non-receptor tyrosine kinase (1043 aa).

One can recognise a Protein kinase domain in the interval 113 to 379 (ITLCKELGQG…SDIVAKFPER (267 aa)). ATP is bound by residues 119 to 127 (LGQGEFGSV) and Lys146. Residue Asp241 is the Proton acceptor of the active site. The SH3 domain maps to 379–444 (RRAQSVRAVV…RPTDTVAHLG (66 aa)). Residues 443–481 (LGSEPPCSNGTIENGFSEKEKGGKKNKKAEKESERERKK) form a disordered region. The span at 458–481 (FSEKEKGGKKNKKAEKESERERKK) shows a compositional bias: basic and acidic residues. The CRIB domain maps to 484–498 (ISEPVGDVRHTCHVG). Disordered regions lie at residues 514–644 (MCPT…SAAN), 790–842 (KINE…GWSS), 859–898 (KQASVSPPPMSPTSSRLSTLDRSSISPAPPRPVTPPLSVR), and 932–993 (LIDG…RQFP). A compositionally biased stretch (low complexity) spans 516–543 (PTSSSPSTSRGSQASPAPSHTSSSTTSS). Polar residues predominate over residues 610–624 (GNQHSVQVHDQFSSL). Residues 630–644 (SLTPTAPPLTASAAN) are compositionally biased toward low complexity. Positions 785 to 812 (EQEVRKINEKSAREHRKTEDLLREERQK) form a coiled coil. Residues 790 to 818 (KINEKSAREHRKTEDLLREERQKEQKPGE) are compositionally biased toward basic and acidic residues. Positions 825–842 (PAESLYSTRTPQQEGWSS) are enriched in polar residues. The segment covering 870–884 (PTSSRLSTLDRSSIS) has biased composition (low complexity).

It belongs to the protein kinase superfamily. Tyr protein kinase family. Mg(2+) serves as cofactor.

It catalyses the reaction L-tyrosyl-[protein] + ATP = O-phospho-L-tyrosyl-[protein] + ADP + H(+). The catalysed reaction is L-seryl-[protein] + ATP = O-phospho-L-seryl-[protein] + ADP + H(+). The enzyme catalyses L-threonyl-[protein] + ATP = O-phospho-L-threonyl-[protein] + ADP + H(+). In terms of biological role, probable tyrosine protein kinase which plays a role in vulva development, probably by acting as a negative regulator of the let-23/EGFR and let-60/ras pathway. Involved in the negative regulation of germline development. This is Ack-related non-receptor tyrosine kinase from Caenorhabditis elegans.